The chain runs to 401 residues: Heparan-sulfate 6-O-sulfotransferase 1 (401 aa).

Residues 1–4 lie on the Cytoplasmic side of the membrane; the sequence is MVER. Residues 5-27 form a helical; Signal-anchor for type II membrane protein membrane-spanning segment; the sequence is ASKFVLVVAGSACFMLILYQYAG. Topologically, residues 28–401 are lumenal; the sequence is PGLSLGAPGG…DYMSHIIEKW (374 aa). 83–91 is a 3'-phosphoadenylyl sulfate binding site; it reads HIQKTGGTT. Substrate is bound by residues 113 to 114, arginine 130, tryptophan 135, and histidine 140; that span reads KK. Catalysis depends on histidine 140, which acts as the Proton acceptor. 2 residues coordinate 3'-phosphoadenylyl sulfate: arginine 175 and serine 183. Residues histidine 187 and tryptophan 194 each coordinate substrate. Asparagine 254 is a glycosylation site (N-linked (GlcNAc...) asparagine). 307-309 provides a ligand contact to 3'-phosphoadenylyl sulfate; it reads MQY. Asparagine 310 carries an N-linked (GlcNAc...) asparagine glycan. 313 to 314 contributes to the 3'-phosphoadenylyl sulfate binding site; that stretch reads RA. The tract at residues 367 to 389 is disordered; the sequence is ERLLHRSKEALPREDTEEPGRVP.

It belongs to the sulfotransferase 6 family. N-glycosylated.

It is found in the membrane. It carries out the reaction alpha-D-glucosaminyl-[heparan sulfate](n) + 3'-phosphoadenylyl sulfate = 6-sulfo-alpha-D-glucosaminyl-[heparan sulfate](n) + adenosine 3',5'-bisphosphate + H(+). Inhibited by dithiothreitol and stimulated by protamine. Functionally, 6-O-sulfation enzyme which catalyzes the transfer of sulfate from 3'-phosphoadenosine 5'-phosphosulfate (PAPS) to position 6 of the N-sulfoglucosamine residue (GlcNS) of heparan sulfate. Also transfers sulfate to CDSNS-heparin and performs the crucial step modification in the biosynthesis of anticoagulant heparan sulfate (HSact). Critical for normal neuronal development where it may play a role in neuron branching. May also play a role in limb development. May prefer iduronic acid. This Cricetulus griseus (Chinese hamster) protein is Heparan-sulfate 6-O-sulfotransferase 1.